Consider the following 240-residue polypeptide: uncharacterized protein (240 aa).

2 disordered regions span residues 125–148 (RRLD…EDVD) and 177–240 (DESN…RKSR). The segment covering 130-148 (SSEDGEEEEENDYIDEDVD) has biased composition (acidic residues). Residues 192–203 (SPRKSHIDHDFV) are compositionally biased toward basic and acidic residues. The segment covering 204–217 (IPEDEMLSEEEEQE) has biased composition (acidic residues). Residue S231 is modified to Phosphoserine.

Belongs to the UTP5 family.

The protein resides in the cytoplasm. It is found in the nucleus. This is an uncharacterized protein from Schizosaccharomyces pombe (strain 972 / ATCC 24843) (Fission yeast).